The following is a 229-amino-acid chain: Flagellar L-ring protein (229 aa).

Positions 1 to 25 (MKQVRLLPSATVRAACAVAVAALAG) are cleaved as a signal peptide. The N-palmitoyl cysteine moiety is linked to residue cysteine 26. Cysteine 26 is lipidated: S-diacylglycerol cysteine.

The protein belongs to the FlgH family. As to quaternary structure, the basal body constitutes a major portion of the flagellar organelle and consists of four rings (L,P,S, and M) mounted on a central rod.

The protein localises to the cell outer membrane. The protein resides in the bacterial flagellum basal body. Assembles around the rod to form the L-ring and probably protects the motor/basal body from shearing forces during rotation. The protein is Flagellar L-ring protein of Burkholderia vietnamiensis (strain G4 / LMG 22486) (Burkholderia cepacia (strain R1808)).